The primary structure comprises 435 residues: Serine--tRNA ligase (435 aa).

242 to 244 (TAE) provides a ligand contact to L-serine. 273–275 (RSE) contacts ATP. L-serine is bound at residue E296. Position 360–363 (360–363 (EISS)) interacts with ATP. S396 contributes to the L-serine binding site.

It belongs to the class-II aminoacyl-tRNA synthetase family. Type-1 seryl-tRNA synthetase subfamily. In terms of assembly, homodimer. The tRNA molecule binds across the dimer.

It is found in the cytoplasm. The enzyme catalyses tRNA(Ser) + L-serine + ATP = L-seryl-tRNA(Ser) + AMP + diphosphate + H(+). It carries out the reaction tRNA(Sec) + L-serine + ATP = L-seryl-tRNA(Sec) + AMP + diphosphate + H(+). Its pathway is aminoacyl-tRNA biosynthesis; selenocysteinyl-tRNA(Sec) biosynthesis; L-seryl-tRNA(Sec) from L-serine and tRNA(Sec): step 1/1. Catalyzes the attachment of serine to tRNA(Ser). Is also able to aminoacylate tRNA(Sec) with serine, to form the misacylated tRNA L-seryl-tRNA(Sec), which will be further converted into selenocysteinyl-tRNA(Sec). The sequence is that of Serine--tRNA ligase from Vibrio vulnificus (strain YJ016).